Here is a 129-residue protein sequence, read N- to C-terminus: Histone H2A-IV (129 aa).

Belongs to the histone H2A family. As to quaternary structure, the nucleosome is a histone octamer containing two molecules each of H2A, H2B, H3 and H4 assembled in one H3-H4 heterotetramer and two H2A-H2B heterodimers. The octamer wraps approximately 147 bp of DNA.

Its subcellular location is the nucleus. It is found in the chromosome. Its function is as follows. Core component of nucleosome. Nucleosomes wrap and compact DNA into chromatin, limiting DNA accessibility to the cellular machineries which require DNA as a template. Histones thereby play a central role in transcription regulation, DNA repair, DNA replication and chromosomal stability. DNA accessibility is regulated via a complex set of post-translational modifications of histones, also called histone code, and nucleosome remodeling. This chain is Histone H2A-IV, found in Volvox carteri (Green alga).